The following is a 465-amino-acid chain: Cysteine--tRNA ligase (465 aa).

Residue Cys-29 participates in Zn(2+) binding. The 'HIGH' region signature appears at 31–41; that stretch reads ITPYDEVHLGH. Zn(2+) is bound by residues Cys-212, His-237, and Glu-241. The 'KMSKS' region motif lies at 269–273; it reads KMSKS. Lys-272 is an ATP binding site.

It belongs to the class-I aminoacyl-tRNA synthetase family. Monomer. The cofactor is Zn(2+).

Its subcellular location is the cytoplasm. It catalyses the reaction tRNA(Cys) + L-cysteine + ATP = L-cysteinyl-tRNA(Cys) + AMP + diphosphate. In Endomicrobium trichonymphae, this protein is Cysteine--tRNA ligase.